Here is a 178-residue protein sequence, read N- to C-terminus: Sec-independent protein translocase protein TatB (178 aa).

Residues 2-22 (LPEIGAAELLIIAAVALIVVG) traverse the membrane as a helical segment. The segment at 104–178 (HSPTGYENTV…KARKTAGSAE (75 aa)) is disordered. A compositionally biased stretch (pro residues) spans 114 to 131 (EPPPPEPEPQPAAEPAPK). A compositionally biased stretch (low complexity) spans 141-154 (PKAAAAPKAAAKPK).

The protein belongs to the TatB family. The Tat system comprises two distinct complexes: a TatABC complex, containing multiple copies of TatA, TatB and TatC subunits, and a separate TatA complex, containing only TatA subunits. Substrates initially bind to the TatABC complex, which probably triggers association of the separate TatA complex to form the active translocon.

The protein localises to the cell inner membrane. Part of the twin-arginine translocation (Tat) system that transports large folded proteins containing a characteristic twin-arginine motif in their signal peptide across membranes. Together with TatC, TatB is part of a receptor directly interacting with Tat signal peptides. TatB may form an oligomeric binding site that transiently accommodates folded Tat precursor proteins before their translocation. This chain is Sec-independent protein translocase protein TatB, found in Phenylobacterium zucineum (strain HLK1).